The sequence spans 616 residues: MLLASAVVVWEWLNEHGRWRPYSPAVSHHIEAVVRAGPRAGGSVVLGQVDSRLAPYIIDLQSMNQFRQDTGTLRPVRRNYYDPSSAPGKGVVWEWENDNGSWTPYDMEVGITIQYAYEKQHPWIDLTSIGFSYIIDFSTMGQINRQTQRQRRVRRRLDLIYPMVTGTMPKTQSWPVSPGPATSSPAPPCSCPQCVLVMSVKAAVVHGGTGPPAVRKNMALSGVGKLPQPPGPGAKPLDTTGTIRGPGKTAPSQVIRRQVSNAPAGATVGSPASPQGSNRKTGRVALATLNRSNLQRLAIAQSRVLIASGVPTVPVKNLNGSSPVNPALAGITGILMSAAGLPVCLTRPPKLVLHPPPVSKSEIKSIPGVSNTSRKTTKKQAKKGKTPEEVLKKYLQKVRHPPEEDCTICMERLTAPSGYKGPQPTVKPDLVGKLSRCGHIYHIYCLVAMYNNGNKDGSLQCPTCKTIYGVKTGTQPPGKMEYHLIPHSLPGHPDCKTIRIIYSIPPGIQGPEHPNPGKSFSARGFPRHCYLPDSEKGRKVLKLLLVAWDRRLIFAIGTSSTTGESDTVIWNEVHHKTEFGSNLTGHGYPDANYLDNVLAELAAQGISEDSTSHEKD.

WWE domains are found at residues 1 to 78 and 79 to 155; these read MLLA…PVRR and NYYD…RVRR. Disordered stretches follow at residues 223–254 and 355–387; these read VGKLPQPPGPGAKPLDTTGTIRGPGKTAPSQV and PPPVSKSEIKSIPGVSNTSRKTTKKQAKKGKTP. Basic residues predominate over residues 375–384; it reads KTTKKQAKKG. Residues 406-465 form an RING-type; atypical zinc finger; the sequence is CTICMERLTAPSGYKGPQPTVKPDLVGKLSRCGHIYHIYCLVAMYNNGNKDGSLQCPTCK.

It belongs to the Deltex family. Interacts with NLRP4. As to expression, expressed in brain, testis, embryonic fibroblasts and thymocytes.

It is found in the cytoplasm. The enzyme catalyses S-ubiquitinyl-[E2 ubiquitin-conjugating enzyme]-L-cysteine + [acceptor protein]-L-lysine = [E2 ubiquitin-conjugating enzyme]-L-cysteine + N(6)-ubiquitinyl-[acceptor protein]-L-lysine.. Its pathway is protein modification; protein ubiquitination. Functionally, functions as a ubiquitin ligase protein in vivo, mediating 'Lys48'-linked polyubiquitination and promoting degradation of TBK1, targeting to TBK1 requires interaction with NLRP4. Regulator of Notch signaling, a signaling pathway involved in cell-cell communications that regulates a broad spectrum of cell-fate determinations. In Mus musculus (Mouse), this protein is E3 ubiquitin-protein ligase DTX4 (Dtx4).